The primary structure comprises 474 residues: tRNA-2-methylthio-N(6)-dimethylallyladenosine synthase (474 aa).

The region spanning 3–120 (KKLLIKTWGC…LPEMIKQSQT (118 aa)) is the MTTase N-terminal domain. The [4Fe-4S] cluster site is built by Cys-12, Cys-49, Cys-83, Cys-157, Cys-161, and Cys-164. The region spanning 143–375 (RAEGATAFVS…QQTINAQAMR (233 aa)) is the Radical SAM core domain. The TRAM domain occupies 378–441 (RLMLATEQRV…ANSLRGELVR (64 aa)).

The protein belongs to the methylthiotransferase family. MiaB subfamily. Monomer. [4Fe-4S] cluster is required as a cofactor.

It is found in the cytoplasm. The catalysed reaction is N(6)-dimethylallyladenosine(37) in tRNA + (sulfur carrier)-SH + AH2 + 2 S-adenosyl-L-methionine = 2-methylsulfanyl-N(6)-dimethylallyladenosine(37) in tRNA + (sulfur carrier)-H + 5'-deoxyadenosine + L-methionine + A + S-adenosyl-L-homocysteine + 2 H(+). Its function is as follows. Catalyzes the methylthiolation of N6-(dimethylallyl)adenosine (i(6)A), leading to the formation of 2-methylthio-N6-(dimethylallyl)adenosine (ms(2)i(6)A) at position 37 in tRNAs that read codons beginning with uridine. The chain is tRNA-2-methylthio-N(6)-dimethylallyladenosine synthase from Vibrio parahaemolyticus serotype O3:K6 (strain RIMD 2210633).